Reading from the N-terminus, the 233-residue chain is Probable translation initiation factor, mitochondrial (233 aa).

Residues 1–39 (MNSYLQFPHRKLFIQFSYSLTSVFRKCQSRTFMNSQFAS) constitute a mitochondrion transit peptide.

It belongs to the IF-3 family.

It localises to the mitochondrion. In terms of biological role, may be involved in mitochondrial translation initiation. This chain is Probable translation initiation factor, mitochondrial, found in Schizosaccharomyces pombe (strain 972 / ATCC 24843) (Fission yeast).